The following is an 88-amino-acid chain: Cell division topological specificity factor (88 aa).

The protein belongs to the MinE family.

Functionally, prevents the cell division inhibition by proteins MinC and MinD at internal division sites while permitting inhibition at polar sites. This ensures cell division at the proper site by restricting the formation of a division septum at the midpoint of the long axis of the cell. This chain is Cell division topological specificity factor, found in Cronobacter sakazakii (strain ATCC BAA-894) (Enterobacter sakazakii).